Reading from the N-terminus, the 300-residue chain is NAD kinase (300 aa).

Residue aspartate 75 is the Proton acceptor of the active site. Residues 75 to 76 (DG), 149 to 150 (ND), arginine 177, aspartate 179, 190 to 195 (TAYALS), alanine 214, and glutamine 248 contribute to the NAD(+) site.

It belongs to the NAD kinase family. The cofactor is a divalent metal cation.

Its subcellular location is the cytoplasm. The enzyme catalyses NAD(+) + ATP = ADP + NADP(+) + H(+). Functionally, involved in the regulation of the intracellular balance of NAD and NADP, and is a key enzyme in the biosynthesis of NADP. Catalyzes specifically the phosphorylation on 2'-hydroxyl of the adenosine moiety of NAD to yield NADP. This is NAD kinase from Burkholderia multivorans (strain ATCC 17616 / 249).